A 114-amino-acid chain; its full sequence is T cell receptor beta variable 6-6 (114 aa).

The N-terminal stretch at 1–21 is a signal peptide; that stretch reads MSISLLCCAAFPLLWAGPVNA. The region spanning 22–114 is the Ig-like domain; that stretch reads GVTQTPKFRI…TSVYFCASSY (93 aa). A disulfide bond links cysteine 42 and cysteine 110. Asparagine 84 carries N-linked (GlcNAc...) asparagine glycosylation.

As to quaternary structure, alpha-beta TR is a heterodimer composed of an alpha and beta chain; disulfide-linked. The alpha-beta TR is associated with the transmembrane signaling CD3 coreceptor proteins to form the TR-CD3 (TcR or TCR). The assembly of alpha-beta TR heterodimers with CD3 occurs in the endoplasmic reticulum where a single alpha-beta TR heterodimer associates with one CD3D-CD3E heterodimer, one CD3G-CD3E heterodimer and one CD247 homodimer forming a stable octameric structure. CD3D-CD3E and CD3G-CD3E heterodimers preferentially associate with TR alpha and TR beta chains, respectively. The association of the CD247 homodimer is the last step of TcR assembly in the endoplasmic reticulum and is required for transport to the cell surface.

It is found in the cell membrane. V region of the variable domain of T cell receptor (TR) beta chain that participates in the antigen recognition. Alpha-beta T cell receptors are antigen specific receptors which are essential to the immune response and are present on the cell surface of T lymphocytes. Recognize peptide-major histocompatibility (MH) (pMH) complexes that are displayed by antigen presenting cells (APC), a prerequisite for efficient T cell adaptive immunity against pathogens. Binding of alpha-beta TR to pMH complex initiates TR-CD3 clustering on the cell surface and intracellular activation of LCK that phosphorylates the ITAM motifs of CD3G, CD3D, CD3E and CD247 enabling the recruitment of ZAP70. In turn ZAP70 phosphorylates LAT, which recruits numerous signaling molecules to form the LAT signalosome. The LAT signalosome propagates signal branching to three major signaling pathways, the calcium, the mitogen-activated protein kinase (MAPK) kinase and the nuclear factor NF-kappa-B (NF-kB) pathways, leading to the mobilization of transcription factors that are critical for gene expression and essential for T cell growth and differentiation. The T cell repertoire is generated in the thymus, by V-(D)-J rearrangement. This repertoire is then shaped by intrathymic selection events to generate a peripheral T cell pool of self-MH restricted, non-autoaggressive T cells. Post-thymic interaction of alpha-beta TR with the pMH complexes shapes TR structural and functional avidity. This chain is T cell receptor beta variable 6-6, found in Homo sapiens (Human).